A 528-amino-acid polypeptide reads, in one-letter code: uncharacterized protein (528 aa).

Residue D6 to E35 coordinates FAD. Catalysis depends on H468, which acts as the Proton acceptor.

This sequence belongs to the GMC oxidoreductase family. It depends on FAD as a cofactor.

This is an uncharacterized protein from Mycobacterium bovis (strain ATCC BAA-935 / AF2122/97).